Reading from the N-terminus, the 197-residue chain is Elongation factor Ts (197 aa).

The tract at residues 81-84 is involved in Mg(2+) ion dislocation from EF-Tu; the sequence is TDFV.

The protein belongs to the EF-Ts family.

The protein localises to the cytoplasm. Functionally, associates with the EF-Tu.GDP complex and induces the exchange of GDP to GTP. It remains bound to the aminoacyl-tRNA.EF-Tu.GTP complex up to the GTP hydrolysis stage on the ribosome. The protein is Elongation factor Ts of Coprothermobacter proteolyticus (strain ATCC 35245 / DSM 5265 / OCM 4 / BT).